Consider the following 339-residue polypeptide: Uracil nucleotide/cysteinyl leukotriene receptor (339 aa).

The Extracellular portion of the chain corresponds to 1–36 (MNGLEAALPSLTDNSSLAYSEQCGQETPLENMLFAC). N-linked (GlcNAc...) asparagine glycosylation occurs at asparagine 14. Residues 37–57 (FYLLDFILAFVGNALALWLFI) form a helical membrane-spanning segment. Over 58 to 64 (WDHKSGT) the chain is Cytoplasmic. Residues 65-85 (PANVFLMHLAVADLSCVLVLP) form a helical membrane-spanning segment. The Extracellular portion of the chain corresponds to 86–105 (TRLVYHFSGNHWPFGEIPCR). Cysteine 104 and cysteine 181 are disulfide-bonded. A helical membrane pass occupies residues 106–126 (LTGFLFYLNMYASIYFLTCIS). Residues 127 to 147 (ADRFLAIVHPVKSLKLRRPLY) are Cytoplasmic-facing. Residues 148–168 (AHLACAFLWIVVAVAMAPLLV) traverse the membrane as a helical segment. Topologically, residues 169-195 (SPQTVQTNHTVVCLQLYREKASHHALA) are extracellular. An N-linked (GlcNAc...) asparagine glycan is attached at asparagine 176. A helical transmembrane segment spans residues 196–216 (SLAVAFTFPFITTVTCYLLII). Topologically, residues 217-232 (RSLRQGPRIEKHLKNK) are cytoplasmic. The helical transmembrane segment at 233 to 253 (AVRMIAMVLAIFLICFVPYHI) threads the bilayer. The Extracellular segment spans residues 254–280 (HRSVYVLHYRGGGTSCAAQRALALGNR). The chain crosses the membrane as a helical span at residues 281–301 (ITSCLTSLNGALDPVMYFFVA). Over 302–339 (EKFRHALCNLLCSKRLTGPPPSFEGKTNESSLSARSEL) the chain is Cytoplasmic.

This sequence belongs to the G-protein coupled receptor 1 family.

It is found in the cell membrane. In terms of biological role, dual specificity receptor for uracil nucleotides and cysteinyl leukotrienes (CysLTs). Signals through G(i) and inhibition of adenylyl cyclase. May mediate brain damage by nucleotides and CysLTs following ischemia. This is Uracil nucleotide/cysteinyl leukotriene receptor from Mus musculus (Mouse).